The chain runs to 330 residues: Phenylalanine--tRNA ligase alpha subunit (330 aa).

E257 contributes to the Mg(2+) binding site.

It belongs to the class-II aminoacyl-tRNA synthetase family. Phe-tRNA synthetase alpha subunit type 1 subfamily. As to quaternary structure, tetramer of two alpha and two beta subunits. Mg(2+) is required as a cofactor.

The protein resides in the cytoplasm. The catalysed reaction is tRNA(Phe) + L-phenylalanine + ATP = L-phenylalanyl-tRNA(Phe) + AMP + diphosphate + H(+). The chain is Phenylalanine--tRNA ligase alpha subunit from Nostoc punctiforme (strain ATCC 29133 / PCC 73102).